Consider the following 186-residue polypeptide: MDKEHLKKNLQEKMEKALKVLDHELKGLRTGRASVNLLDSVTVEAYGSKMPLSQVASLSTPDARTINVQVWDKSMVSSVEKGITIANLGLTPATDGQLIRLPIPALTEERRTELVKLAHKYGEDTKISLRNIRRDGNEALKKLAKDNVIAKDEHHSLSEQVQKLTDDYSNKVDSVIKQKEQEIMTV.

This sequence belongs to the RRF family.

It is found in the cytoplasm. In terms of biological role, responsible for the release of ribosomes from messenger RNA at the termination of protein biosynthesis. May increase the efficiency of translation by recycling ribosomes from one round of translation to another. In Rickettsia africae (strain ESF-5), this protein is Ribosome-recycling factor.